A 125-amino-acid polypeptide reads, in one-letter code: MEYQFTHSIHGVVAKCSMDHEAFARWLNAEITENPSQLAPIFAEIEKCRAAFPNHYECVFEGREYSLYFDYDEVMAKANNLDAAFDDEEMEEGFQFYNEESIAFCGLDDFEKFLKAYQHFVQTYH.

It belongs to the UPF0231 family.

The protein is UPF0231 protein in hemN 3'region of Mannheimia haemolytica (Pasteurella haemolytica).